A 467-amino-acid chain; its full sequence is Na(+)/H(+) exchange regulatory cofactor-like protein nrfl-1 (467 aa).

PDZ domains lie at 12-94 (RLCV…ISEE) and 143-225 (LAEL…ASED). The interval 344 to 429 (MSSHTEVLPP…ASSTSGYDDD (86 aa)) is disordered. The segment covering 407 to 425 (PSPLSNGSSHGYAASSTSG) has biased composition (polar residues).

Interacts (via PDZ 2 domain) with aat-6 (via PDZ-binding motif); the interaction sequesters aat-6 to the apical cell membrane of intestinal cells. In terms of processing, phosphorylated. Expressed in the excretory canal and intestine. Expressed on the apical cell membrane of intestinal cells (at protein level).

The protein localises to the cell projection. The protein resides in the microvillus membrane. It localises to the apical cell membrane. Its function is as follows. Scaffold protein that connects plasma membrane proteins with members of the ezrin/moesin/radixin family and thereby helps to link them to the actin cytoskeleton and to regulate their surface expression. Anchors the amino acid transporter protein aat-6 to the apical cell membrane of intestinal cells, particularly in older animals, in order to maintain amino acid homeostasis. May play a role in promoting fertility. The chain is Na(+)/H(+) exchange regulatory cofactor-like protein nrfl-1 from Caenorhabditis elegans.